Here is a 623-residue protein sequence, read N- to C-terminus: MTVPLIHSRDVLESRLKEIPAEPGVYLMRDATDQILYVGKSKKLRSRVRSYFRFTSDLSPRIQRMVAQVCEIEFIVTDNESEALALEDNLIKTHQPPYNVLLKDDKKYPYLCITWSEPYPQLYITRHRRLDRNQDKYYGPYTDVGLLRHTLGLVKRIFPLRQRPKPLYKDRTCLNYDIGRCPGVCQGLISPEEYRKTLTQVAMIFQGQTDELIRELQEKMIQAAEQENYEAAARYRDQIRGLEQLGESQKVSLPNSTVSRDALALAMNDSRACIQLFQVRAGKLVGRLGFVAENRGDDPGLILQRALQEHYQYCDPVEIPSEILTQYELPDHDFLESWLSQKKGRKVSLVAPQRQSKAELIELVERNAQLELTRTQRLADRDAAALERLAEVLDLPDVPRRLEAYDISHIQGSDAVASQVVFIDGLPAKQHYRRYKIRNPEVRPGHSDDFASHAEVARRRFSKMTPEDQPDLVLIDGGKGQLSAVMAVLADLGLDHLPVIALAKREEEIFLPGNPVPLRLPAQDPARLLLQRLRDEAHRFALAFHRQQRKARQHASTLDEIPGLGKYRQKLLMEEFRSIARIQVASEDQLAQVPGIGPKIARQIYRYFHPETQAESPETAQVE.

Positions 21–100 (AEPGVYLMRD…IKTHQPPYNV (80 aa)) constitute a GIY-YIG domain. Positions 210-245 (DELIRELQEKMIQAAEQENYEAAARYRDQIRGLEQL) constitute a UVR domain.

It belongs to the UvrC family. As to quaternary structure, interacts with UvrB in an incision complex.

It localises to the cytoplasm. The UvrABC repair system catalyzes the recognition and processing of DNA lesions. UvrC both incises the 5' and 3' sides of the lesion. The N-terminal half is responsible for the 3' incision and the C-terminal half is responsible for the 5' incision. This chain is UvrABC system protein C, found in Synechococcus sp. (strain JA-2-3B'a(2-13)) (Cyanobacteria bacterium Yellowstone B-Prime).